A 288-amino-acid chain; its full sequence is 4-hydroxybenzoate octaprenyltransferase (288 aa).

Transmembrane regions (helical) follow at residues 33 to 53 (LWALWVASPGVPPLWILAVFV), 99 to 119 (LFIVLVLLSFLLVLTLNTMTI), 163 to 183 (ESLPLSCWLMFLANILWAVAY), 213 to 233 (LIIGILQVAVLALMGAVGWLN), 234 to 254 (GLGWEYYWSLFVAAGLFGWQQ), and 268 to 288 (AFMNNNYVGLVLFLGLAMSYL).

This sequence belongs to the UbiA prenyltransferase family. Mg(2+) serves as cofactor.

The protein resides in the cell inner membrane. It carries out the reaction all-trans-octaprenyl diphosphate + 4-hydroxybenzoate = 4-hydroxy-3-(all-trans-octaprenyl)benzoate + diphosphate. The protein operates within cofactor biosynthesis; ubiquinone biosynthesis. Its function is as follows. Catalyzes the prenylation of para-hydroxybenzoate (PHB) with an all-trans polyprenyl group. Mediates the second step in the final reaction sequence of ubiquinone-8 (UQ-8) biosynthesis, which is the condensation of the polyisoprenoid side chain with PHB, generating the first membrane-bound Q intermediate 3-octaprenyl-4-hydroxybenzoate. The sequence is that of 4-hydroxybenzoate octaprenyltransferase from Klebsiella pneumoniae subsp. pneumoniae (strain ATCC 700721 / MGH 78578).